The primary structure comprises 178 residues: CDP-archaeol synthase (178 aa).

5 helical membrane-spanning segments follow: residues 3–23, 56–76, 91–111, 131–151, and 152–172; these read LLLL…ANAV, FFGI…VILY, IILS…GSFI, FIIF…NIIV, and LLLV…YKLH.

The protein belongs to the CDP-archaeol synthase family. The cofactor is Mg(2+).

It is found in the cell membrane. It carries out the reaction 2,3-bis-O-(geranylgeranyl)-sn-glycerol 1-phosphate + CTP + H(+) = CDP-2,3-bis-O-(geranylgeranyl)-sn-glycerol + diphosphate. The protein operates within membrane lipid metabolism; glycerophospholipid metabolism. Functionally, catalyzes the formation of CDP-2,3-bis-(O-geranylgeranyl)-sn-glycerol (CDP-archaeol) from 2,3-bis-(O-geranylgeranyl)-sn-glycerol 1-phosphate (DGGGP) and CTP. This reaction is the third ether-bond-formation step in the biosynthesis of archaeal membrane lipids. This Methanococcus maripaludis (strain DSM 14266 / JCM 13030 / NBRC 101832 / S2 / LL) protein is CDP-archaeol synthase.